Reading from the N-terminus, the 183-residue chain is uncharacterized protein (183 aa).

A run of 4 helical transmembrane segments spans residues 37–59 (LFGY…PRQF), 79–98 (AILL…VTSV), 110–132 (WRTF…VLVL), and 142–161 (AFYA…TYVF).

It localises to the cell membrane. This is an uncharacterized protein from Archaeoglobus fulgidus (strain ATCC 49558 / DSM 4304 / JCM 9628 / NBRC 100126 / VC-16).